Consider the following 512-residue polypeptide: Lysine--tRNA ligase (512 aa).

The Mg(2+) site is built by E408 and E415.

The protein belongs to the class-II aminoacyl-tRNA synthetase family. As to quaternary structure, homodimer. Requires Mg(2+) as cofactor.

The protein resides in the cytoplasm. The catalysed reaction is tRNA(Lys) + L-lysine + ATP = L-lysyl-tRNA(Lys) + AMP + diphosphate. The sequence is that of Lysine--tRNA ligase from Prochlorococcus marinus (strain MIT 9312).